We begin with the raw amino-acid sequence, 238 residues long: ATP-dependent dethiobiotin synthetase BioD (238 aa).

12-17 contributes to the ATP binding site; the sequence is EVGKTV. T16 lines the Mg(2+) pocket. The active site involves K37. Substrate is bound at residue T41. Residues D50, 109–112, 170–171, and 200–202 each bind ATP; these read EGAG, GS, and PAG. Residues D50 and E109 each coordinate Mg(2+).

This sequence belongs to the dethiobiotin synthetase family. As to quaternary structure, homodimer. Mg(2+) serves as cofactor.

The protein localises to the cytoplasm. It carries out the reaction (7R,8S)-7,8-diammoniononanoate + CO2 + ATP = (4R,5S)-dethiobiotin + ADP + phosphate + 3 H(+). It functions in the pathway cofactor biosynthesis; biotin biosynthesis; biotin from 7,8-diaminononanoate: step 1/2. Functionally, catalyzes a mechanistically unusual reaction, the ATP-dependent insertion of CO2 between the N7 and N8 nitrogen atoms of 7,8-diaminopelargonic acid (DAPA, also called 7,8-diammoniononanoate) to form a ureido ring. This is ATP-dependent dethiobiotin synthetase BioD from Streptomyces avermitilis (strain ATCC 31267 / DSM 46492 / JCM 5070 / NBRC 14893 / NCIMB 12804 / NRRL 8165 / MA-4680).